The following is a 245-amino-acid chain: uncharacterized protein (245 aa).

The N-terminal stretch at 1–20 (MIKQTIVALLLSVGASSVFA) is a signal peptide.

This sequence to E.coli YmcB.

This is an uncharacterized protein from Escherichia coli (strain K12).